Reading from the N-terminus, the 88-residue chain is Alpha-latrotoxin associated low molecular weight protein (88 aa).

The signal sequence occupies residues 1 to 18 (MSKLFFVAFLCLIISVFA).

This sequence belongs to the arthropod CHH/MIH/GIH/VIH hormone family. In terms of tissue distribution, expressed by the venom gland.

Its subcellular location is the secreted. Its function is as follows. May increase the toxicity of alpha-latrotoxin and/or other venom components. Is non-toxic to mice and to the cockroach Periplaneta americana. This Latrodectus hesperus (Western black widow spider) protein is Alpha-latrotoxin associated low molecular weight protein.